The primary structure comprises 109 residues: UPF0122 protein ABC2295 (109 aa).

This sequence belongs to the UPF0122 family.

Functionally, might take part in the signal recognition particle (SRP) pathway. This is inferred from the conservation of its genetic proximity to ftsY/ffh. May be a regulatory protein. In Shouchella clausii (strain KSM-K16) (Alkalihalobacillus clausii), this protein is UPF0122 protein ABC2295.